The following is a 570-amino-acid chain: NADH-ubiquinone oxidoreductase chain 5 (570 aa).

16 helical membrane passes run 2–22 (FSFF…FKHF), 27–47 (GVFL…LSNL), 56–76 (LIAI…VNFS), 77–97 (FYID…GVFV), 109–129 (PHIS…IILV), 134–154 (LVVF…LINF), 179–199 (VLIA…EAIL), 221–241 (LISF…GFHV), 251–271 (VPAS…FLIM), 285–305 (LVTA…AVFQ), 311–330 (ILAY…CSFG), 335–357 (VIVY…GNLI), 380–400 (FFFL…FGFY), 417–437 (AIFC…FNIL), 476–496 (IFLL…FYLL), and 524–544 (LLNY…LVLF).

It belongs to the complex I subunit 5 family.

The protein resides in the mitochondrion inner membrane. The catalysed reaction is a ubiquinone + NADH + 5 H(+)(in) = a ubiquinol + NAD(+) + 4 H(+)(out). In terms of biological role, core subunit of the mitochondrial membrane respiratory chain NADH dehydrogenase (Complex I) that is believed to belong to the minimal assembly required for catalysis. Complex I functions in the transfer of electrons from NADH to the respiratory chain. The immediate electron acceptor for the enzyme is believed to be ubiquinone. The chain is NADH-ubiquinone oxidoreductase chain 5 (ND5) from Paramecium tetraurelia.